The primary structure comprises 150 residues: Large ribosomal subunit protein uL13 (150 aa).

Belongs to the universal ribosomal protein uL13 family. As to quaternary structure, part of the 50S ribosomal subunit.

This protein is one of the early assembly proteins of the 50S ribosomal subunit, although it is not seen to bind rRNA by itself. It is important during the early stages of 50S assembly. The sequence is that of Large ribosomal subunit protein uL13 from Mesoplasma florum (strain ATCC 33453 / NBRC 100688 / NCTC 11704 / L1) (Acholeplasma florum).